The following is a 210-amino-acid chain: BAG family molecular chaperone regulator 2 (210 aa).

A2 is modified (N-acetylalanine). Phosphoserine is present on residues S20, S31, and S73. Positions 20-60 form a coiled coil; it reads SMADRSSRLLESLDQLELRVEALRDAATAVEQEKEILLEMI. Positions 109 to 189 constitute a BAG domain; sequence SLKHATRIID…NIDNSDKAIK (81 aa).

In terms of assembly, binds to the ATPase domain of HSP/HSC70 chaperones. May interact with NWD1. Interacts with HSPA1A (via NBD), HSPA1B (via NBD) and HSPA8. May interact with DNJC9; the interaction seems to be histone-dependent.

Its function is as follows. Co-chaperone for HSP70 and HSC70 chaperone proteins. Acts as a nucleotide-exchange factor (NEF) promoting the release of ADP from the HSP70 and HSC70 proteins thereby triggering client/substrate protein release. The protein is BAG family molecular chaperone regulator 2 (Bag2) of Mus musculus (Mouse).